A 520-amino-acid chain; its full sequence is Probable cytochrome P450 4p2 (520 aa).

Glu-325 and Cys-464 together coordinate heme.

It belongs to the cytochrome P450 family. It depends on heme as a cofactor.

The protein resides in the endoplasmic reticulum membrane. Its subcellular location is the microsome membrane. In terms of biological role, may be involved in the metabolism of insect hormones and in the breakdown of synthetic insecticides. The sequence is that of Probable cytochrome P450 4p2 (Cyp4p2) from Drosophila melanogaster (Fruit fly).